A 689-amino-acid polypeptide reads, in one-letter code: Glycine--tRNA ligase beta subunit (689 aa).

This sequence belongs to the class-II aminoacyl-tRNA synthetase family. Tetramer of two alpha and two beta subunits.

The protein resides in the cytoplasm. The enzyme catalyses tRNA(Gly) + glycine + ATP = glycyl-tRNA(Gly) + AMP + diphosphate. This is Glycine--tRNA ligase beta subunit from Shewanella baltica (strain OS185).